Consider the following 407-residue polypeptide: Peptidase T (407 aa).

Residue His78 participates in Zn(2+) binding. Asp80 is a catalytic residue. Asp139 is a binding site for Zn(2+). Glu173 serves as the catalytic Proton acceptor. Positions 174, 196, and 378 each coordinate Zn(2+).

Belongs to the peptidase M20B family. The cofactor is Zn(2+).

The protein localises to the cytoplasm. The enzyme catalyses Release of the N-terminal residue from a tripeptide.. Cleaves the N-terminal amino acid of tripeptides. The chain is Peptidase T from Macrococcus caseolyticus (strain JCSC5402) (Macrococcoides caseolyticum).